We begin with the raw amino-acid sequence, 356 residues long: DNA polymerase IV (356 aa).

The UmuC domain maps to 6–187 (IIHIDMDYFF…LDIGDFPGVG (182 aa)). Asp10 and Asp105 together coordinate Mg(2+). Residue Glu106 is part of the active site.

This sequence belongs to the DNA polymerase type-Y family. As to quaternary structure, monomer. Mg(2+) is required as a cofactor.

The protein resides in the cytoplasm. It catalyses the reaction DNA(n) + a 2'-deoxyribonucleoside 5'-triphosphate = DNA(n+1) + diphosphate. Poorly processive, error-prone DNA polymerase involved in untargeted mutagenesis. Copies undamaged DNA at stalled replication forks, which arise in vivo from mismatched or misaligned primer ends. These misaligned primers can be extended by PolIV. Exhibits no 3'-5' exonuclease (proofreading) activity. May be involved in translesional synthesis, in conjunction with the beta clamp from PolIII. This chain is DNA polymerase IV, found in Staphylococcus aureus (strain Mu50 / ATCC 700699).